We begin with the raw amino-acid sequence, 272 residues long: Methyl-CpG-binding domain-containing protein 2 (272 aa).

The segment covering 1–15 (MSMSQSRAVQRSSSP) has biased composition (polar residues). The interval 1-24 (MSMSQSRAVQRSSSPNEDRGENQL) is disordered. Residues 53-112 (CPSIGAFTVQCASCFKWRLMPSMQKYEEIREQLLENPFFCDTAREWKPDISCDVPADIYQ) form a CW-type zinc finger. Residues 62–104 (QCASCFKWRLMPSMQKYEEIREQLLENPFFCDTAREWKPDISC) carry the MBD-associated domain (MAD) motif. Zn(2+) contacts are provided by Cys-63, Cys-66, Cys-92, and Cys-104. The 75-residue stretch at 118 to 192 (WAIDKPNISR…SQFSFQIPKP (75 aa)) folds into the MBD domain. Residues 236–250 (LGTPTESGLNNSHYQ) show a composition bias toward polar residues. Positions 236–272 (LGTPTESGLNNSHYQPSKKKKTSTLSIFGSNDELADR) are disordered.

As to quaternary structure, interacts (via MBD domain) with DDM1. Expressed in buds, flowers, stems, siliques and mature seeds.

Its subcellular location is the nucleus. Its function is as follows. Probable transcriptional regulator. This is Methyl-CpG-binding domain-containing protein 2 (MBD2) from Arabidopsis thaliana (Mouse-ear cress).